Here is a 375-residue protein sequence, read N- to C-terminus: Chaperone protein DnaJ (375 aa).

The region spanning 6-71 is the J domain; that stretch reads DYYEVLGVPK…EKRRQYDQFG (66 aa). Residues 138 to 220 form a CR-type zinc finger; it reads GTTKKIDVTL…CYGTGYISSK (83 aa). 8 residues coordinate Zn(2+): C151, C154, C168, C171, C194, C197, C208, and C211. CXXCXGXG motif repeat units lie at residues 151 to 158, 168 to 175, 194 to 201, and 208 to 215; these read CSSCHGTG, CSKCGGRG, CPDCHGTG, and CPDCYGTG.

Belongs to the DnaJ family. Homodimer. The cofactor is Zn(2+).

The protein localises to the cytoplasm. Participates actively in the response to hyperosmotic and heat shock by preventing the aggregation of stress-denatured proteins and by disaggregating proteins, also in an autonomous, DnaK-independent fashion. Unfolded proteins bind initially to DnaJ; upon interaction with the DnaJ-bound protein, DnaK hydrolyzes its bound ATP, resulting in the formation of a stable complex. GrpE releases ADP from DnaK; ATP binding to DnaK triggers the release of the substrate protein, thus completing the reaction cycle. Several rounds of ATP-dependent interactions between DnaJ, DnaK and GrpE are required for fully efficient folding. Also involved, together with DnaK and GrpE, in the DNA replication of plasmids through activation of initiation proteins. This chain is Chaperone protein DnaJ, found in Lachnospira eligens (strain ATCC 27750 / DSM 3376 / VPI C15-48 / C15-B4) (Eubacterium eligens).